The chain runs to 179 residues: Large ribosomal subunit protein uL5 (179 aa).

This sequence belongs to the universal ribosomal protein uL5 family. Part of the 50S ribosomal subunit; part of the 5S rRNA/L5/L18/L25 subcomplex. Contacts the 5S rRNA and the P site tRNA. Forms a bridge to the 30S subunit in the 70S ribosome.

This is one of the proteins that bind and probably mediate the attachment of the 5S RNA into the large ribosomal subunit, where it forms part of the central protuberance. In the 70S ribosome it contacts protein S13 of the 30S subunit (bridge B1b), connecting the 2 subunits; this bridge is implicated in subunit movement. Contacts the P site tRNA; the 5S rRNA and some of its associated proteins might help stabilize positioning of ribosome-bound tRNAs. The protein is Large ribosomal subunit protein uL5 of Staphylococcus aureus (strain MW2).